A 92-amino-acid chain; its full sequence is Large ribosomal subunit protein bL28 (92 aa).

The interval 1–34 is disordered; sequence MGRECEITGKKTMFGNNVPRKGLSRKKGGGGQHI.

Belongs to the bacterial ribosomal protein bL28 family.

In Borrelia turicatae (strain 91E135), this protein is Large ribosomal subunit protein bL28.